A 225-amino-acid chain; its full sequence is Futalosine hydrolase (225 aa).

This sequence belongs to the PNP/UDP phosphorylase family. Futalosine hydrolase subfamily. In terms of assembly, homotetramer.

It carries out the reaction futalosine + H2O = dehypoxanthine futalosine + hypoxanthine. It functions in the pathway quinol/quinone metabolism; menaquinone biosynthesis. No enhancing of inhibitory effects are observed with divalent metal ions. Slightly inhibited by hypoxanthine. Functionally, catalyzes the hydrolysis of futalosine (FL) to dehypoxanthine futalosine (DHFL) and hypoxanthine, a step in the biosynthesis of menaquinone (MK, vitamin K2). Is highly specific to futalosine since it does not accept aminodeoxyfutalosine (AFL), or any structurally related nucleotides and nucleosides as substrate. In Thermus thermophilus (strain ATCC 27634 / DSM 579 / HB8), this protein is Futalosine hydrolase.